The primary structure comprises 350 residues: Probable arabinogalactan endo-beta-1,4-galactanase A (350 aa).

The N-terminal stretch at 1–16 (MIYPLLLSALPLLSSA) is a signal peptide. Asn128 is a glycosylation site (N-linked (GlcNAc...) asparagine). Catalysis depends on Glu152, which acts as the Proton donor. The active-site Nucleophile is Glu262.

This sequence belongs to the glycosyl hydrolase 53 family.

The protein localises to the secreted. It catalyses the reaction The enzyme specifically hydrolyzes (1-&gt;4)-beta-D-galactosidic linkages in type I arabinogalactans.. Endogalactanase involved in the degradation of plant cell wall polysaccharides, and more particularly of hairy regions of pectin. This chain is Probable arabinogalactan endo-beta-1,4-galactanase A (galA), found in Aspergillus tubingensis.